The chain runs to 141 residues: Hemoglobin subunit alpha (141 aa).

The Globin domain occupies 1–141 (VLSPADKTNV…VSTVLTSKYR (141 aa)). At serine 3 the chain carries Phosphoserine. An N6-succinyllysine modification is found at lysine 7. Phosphothreonine is present on threonine 8. N6-succinyllysine is present on lysine 11. At lysine 16 the chain carries N6-acetyllysine; alternate. Residue lysine 16 is modified to N6-succinyllysine; alternate. Tyrosine 24 is modified (phosphotyrosine). Residue serine 35 is modified to Phosphoserine. Lysine 40 bears the N6-succinyllysine mark. Residue serine 49 is modified to Phosphoserine. O2 is bound at residue histidine 58. Histidine 87 provides a ligand contact to heme b. A Phosphoserine modification is found at serine 102. Threonine 108 bears the Phosphothreonine mark. Serine 124 and serine 131 each carry phosphoserine. A phosphothreonine mark is found at threonine 134 and threonine 137. Serine 138 carries the phosphoserine modification.

Belongs to the globin family. In terms of assembly, heterotetramer of two alpha chains and two beta chains. As to expression, red blood cells.

Involved in oxygen transport from the lung to the various peripheral tissues. Its function is as follows. Hemopressin acts as an antagonist peptide of the cannabinoid receptor CNR1. Hemopressin-binding efficiently blocks cannabinoid receptor CNR1 and subsequent signaling. The chain is Hemoglobin subunit alpha (HBA) from Semnopithecus entellus (Northern plains gray langur).